The chain runs to 33 residues: Beta-theraphotoxin-Cm1b (33 aa).

Cystine bridges form between Cys2–Cys17, Cys9–Cys22, and Cys16–Cys29. Leu33 carries the post-translational modification Leucine amide.

This sequence belongs to the neurotoxin 10 (Hwtx-1) family. 04 (CcoTx1) subfamily. In terms of tissue distribution, expressed by the venom gland.

It is found in the secreted. In terms of biological role, inhibits several voltage-gated sodium channels and only one voltage-gated calcium channel (Cav2.2/CACNA1B (IC(50)=1.1 uM) and Nav1.2/SCN2A (IC(50)=3.7-80 nM), Nav1.3/SCN3A (IC(50)=88-5570 nM), Nav1.1/SCN1A (IC(50)=170-407 nM), Nav1.7/SCN9A (IC(50)=95.5-230 nM), Nav1.6/SCN6A (IC(50)=49.9-3990 nM), Nav1.4/SCN4A (IC(50)=113-400 nM or &gt;10 uM), Nav1.5/SCN5A (IC(50)=1524-1634 nM or &gt;10 uM)). The toxin acts by shifting the voltage dependence of channel activation to more depolarized potentials and by blocking the inward component of the sodium current. It shows moderate affinity for lipid bilayers without cholesterol and high affinity for lipid bilayers containing cholesterol. In vivo, this toxin causes general ataxia, lack of response to stimuli, and semiparalysis. After a few minutes, the mice are unable to stand, and breathing is reduced in rhythm and intensity. Symptoms gradually increase with progressive slowing of breathing and flaccid paralysis; death occurred within 10 to 20 minutes post injection. Animals remain totally flaccid, and no symptoms of excitatory neurotoxicity are observed. This chain is Beta-theraphotoxin-Cm1b, found in Ceratogyrus marshalli (Straighthorned baboon tarantula).